We begin with the raw amino-acid sequence, 399 residues long: Paraneoplastic antigen-like protein 6A (399 aa).

The protein belongs to the PNMA family. In terms of tissue distribution, expressed in the brain.

The sequence is that of Paraneoplastic antigen-like protein 6A from Homo sapiens (Human).